The primary structure comprises 155 residues: Large ribosomal subunit protein uL22 (155 aa).

Belongs to the universal ribosomal protein uL22 family. As to quaternary structure, part of the 50S ribosomal subunit.

In terms of biological role, this protein binds specifically to 23S rRNA. It makes multiple contacts with different domains of the 23S rRNA in the assembled 50S subunit and ribosome. Functionally, the globular domain of the protein is located near the polypeptide exit tunnel on the outside of the subunit, while an extended beta-hairpin is found that lines the wall of the exit tunnel in the center of the 70S ribosome. The sequence is that of Large ribosomal subunit protein uL22 from Pyrococcus abyssi (strain GE5 / Orsay).